Reading from the N-terminus, the 192-residue chain is dTTP/UTP pyrophosphatase (192 aa).

D71 (proton acceptor) is an active-site residue.

Belongs to the Maf family. YhdE subfamily. Requires a divalent metal cation as cofactor.

The protein resides in the cytoplasm. It catalyses the reaction dTTP + H2O = dTMP + diphosphate + H(+). The catalysed reaction is UTP + H2O = UMP + diphosphate + H(+). In terms of biological role, nucleoside triphosphate pyrophosphatase that hydrolyzes dTTP and UTP. May have a dual role in cell division arrest and in preventing the incorporation of modified nucleotides into cellular nucleic acids. This chain is dTTP/UTP pyrophosphatase, found in Pseudoalteromonas atlantica (strain T6c / ATCC BAA-1087).